Here is a 387-residue protein sequence, read N- to C-terminus: Cysteine desulfurase (387 aa).

Pyridoxal 5'-phosphate-binding positions include glycine 72–threonine 73, asparagine 152, glutamine 180, and serine 200–histidine 202. Lysine 203 is modified (N6-(pyridoxal phosphate)lysine). Residue threonine 238 coordinates pyridoxal 5'-phosphate. The active-site Cysteine persulfide intermediate is cysteine 326. Cysteine 326 contacts [2Fe-2S] cluster.

The protein belongs to the class-V pyridoxal-phosphate-dependent aminotransferase family. NifS/IscS subfamily. As to quaternary structure, homodimer. Pyridoxal 5'-phosphate is required as a cofactor.

It catalyses the reaction (sulfur carrier)-H + L-cysteine = (sulfur carrier)-SH + L-alanine. Its function is as follows. Catalyzes the removal of elemental sulfur atoms from cysteine to produce alanine. Seems to participate in the biosynthesis of the nitrogenase metalloclusters by providing the inorganic sulfur required for the Fe-S core formation. In Sinorhizobium fredii (strain NBRC 101917 / NGR234), this protein is Cysteine desulfurase.